Reading from the N-terminus, the 223-residue chain is Chorismate dehydratase (223 aa).

The protein belongs to the MqnA/MqnD family. MqnA subfamily.

It carries out the reaction chorismate = 3-[(1-carboxyvinyl)-oxy]benzoate + H2O. It functions in the pathway quinol/quinone metabolism; menaquinone biosynthesis. Its function is as follows. Catalyzes the dehydration of chorismate into 3-[(1-carboxyvinyl)oxy]benzoate, a step in the biosynthesis of menaquinone (MK, vitamin K2). In Campylobacter jejuni subsp. jejuni serotype O:23/36 (strain 81-176), this protein is Chorismate dehydratase.